The chain runs to 123 residues: Small ribosomal subunit protein uS12 (123 aa).

The segment at 1–30 (MPTIQQLIRKPRQPKIKRSKSQHMEGCPQK) is disordered. The segment covering 9–21 (RKPRQPKIKRSKS) has biased composition (basic residues). D89 carries the post-translational modification 3-methylthioaspartic acid. The segment at 104 to 123 (TQGVKDRRQRRSKYGAKRPK) is disordered. The segment covering 110-123 (RRQRRSKYGAKRPK) has biased composition (basic residues).

This sequence belongs to the universal ribosomal protein uS12 family. As to quaternary structure, part of the 30S ribosomal subunit. Contacts proteins S8 and S17. May interact with IF1 in the 30S initiation complex.

Functionally, with S4 and S5 plays an important role in translational accuracy. Its function is as follows. Interacts with and stabilizes bases of the 16S rRNA that are involved in tRNA selection in the A site and with the mRNA backbone. Located at the interface of the 30S and 50S subunits, it traverses the body of the 30S subunit contacting proteins on the other side and probably holding the rRNA structure together. The combined cluster of proteins S8, S12 and S17 appears to hold together the shoulder and platform of the 30S subunit. In Jannaschia sp. (strain CCS1), this protein is Small ribosomal subunit protein uS12.